We begin with the raw amino-acid sequence, 626 residues long: 4-hydroxy-3-methylbut-2-en-1-yl diphosphate synthase (flavodoxin) (626 aa).

The [4Fe-4S] cluster site is built by Cys521, Cys524, Cys555, and Glu562.

It belongs to the IspG family. It depends on [4Fe-4S] cluster as a cofactor.

It catalyses the reaction (2E)-4-hydroxy-3-methylbut-2-enyl diphosphate + oxidized [flavodoxin] + H2O + 2 H(+) = 2-C-methyl-D-erythritol 2,4-cyclic diphosphate + reduced [flavodoxin]. It participates in isoprenoid biosynthesis; isopentenyl diphosphate biosynthesis via DXP pathway; isopentenyl diphosphate from 1-deoxy-D-xylulose 5-phosphate: step 5/6. Functionally, converts 2C-methyl-D-erythritol 2,4-cyclodiphosphate (ME-2,4cPP) into 1-hydroxy-2-methyl-2-(E)-butenyl 4-diphosphate. The protein is 4-hydroxy-3-methylbut-2-en-1-yl diphosphate synthase (flavodoxin) of Bacteroides fragilis (strain YCH46).